Here is a 206-residue protein sequence, read N- to C-terminus: LexA repressor (206 aa).

A DNA-binding region (H-T-H motif) is located at residues 28-48; sequence RAEIATRLGFKSANAAEEHLK. Active-site for autocatalytic cleavage activity residues include Ser-123 and Lys-160.

It belongs to the peptidase S24 family. As to quaternary structure, homodimer.

The catalysed reaction is Hydrolysis of Ala-|-Gly bond in repressor LexA.. Its function is as follows. Represses a number of genes involved in the response to DNA damage (SOS response), including recA and lexA. In the presence of single-stranded DNA, RecA interacts with LexA causing an autocatalytic cleavage which disrupts the DNA-binding part of LexA, leading to derepression of the SOS regulon and eventually DNA repair. The sequence is that of LexA repressor from Shewanella putrefaciens (strain CN-32 / ATCC BAA-453).